The sequence spans 364 residues: Long-wave-sensitive opsin 1 (364 aa).

At 1-52 (MAQRWGPQKLAGGQPQAGFEDSTQASIFTYTNNNATRDPFEGPNYHIAPRWV) the chain is on the extracellular side. O-linked (GlcNAc) serine glycosylation is present at Ser-22. Asn-34 is a glycosylation site (N-linked (GlcNAc...) asparagine). The helical transmembrane segment at 53–77 (YHVTSAWMIFVVIASVFTNGLVLAA) threads the bilayer. The Cytoplasmic portion of the chain corresponds to 78 to 89 (TMRFKKLRHPLN). A helical transmembrane segment spans residues 90–115 (WILVNLAVADLAETIIASTISVVNQI). Residues 116–129 (YGYFVLGHPMCVVE) lie on the Extracellular side of the membrane. Cys-126 and Cys-203 are disulfide-bonded. The chain crosses the membrane as a helical span at residues 130–149 (GYTVSLCGITGLWSLAIISW). Residues 150–168 (ERWMVVCKPFGNVRFDAKL) lie on the Cytoplasmic side of the membrane. Residues 169–192 (AVAGIAFSWIWAAVWTAPPIFGWS) traverse the membrane as a helical segment. Residues 193-218 (RYWPHGLKTSCGPDVFSGSSYPGVQS) are Extracellular-facing. The chain crosses the membrane as a helical span at residues 219–246 (YMIVLMITCCIIPLSVIVLCYLQVWLAI). Residues 247–268 (RAVAKQQKESESTQKAEKEVTR) are Cytoplasmic-facing. Residues 269–292 (MVMVMVFAFCLCWGPYTFFACFAA) form a helical membrane-spanning segment. Residues 293–300 (AHPGYAFH) lie on the Extracellular side of the membrane. Residues 301-325 (PLVAALPAYFAKSATIYNPIIYVFM) form a helical membrane-spanning segment. Lys-312 carries the post-translational modification N6-(retinylidene)lysine. Over 326-364 (NRQFRNCILQLFGKKVDDSSELSSVSKTEASSVSSVSPA) the chain is Cytoplasmic.

This sequence belongs to the G-protein coupled receptor 1 family. Opsin subfamily. In terms of processing, phosphorylated on some or all of the serine and threonine residues present in the C-terminal region. As to expression, the three color pigments are found in the cone photoreceptor cells. Expressed in retina.

It localises to the membrane. Functionally, visual pigments are the light-absorbing molecules that mediate vision. They consist of an apoprotein, opsin, covalently linked to cis-retinal. This is Long-wave-sensitive opsin 1 (OPN1LW) from Equus caballus (Horse).